The chain runs to 110 residues: UPF0122 protein spr1167 (110 aa).

It belongs to the UPF0122 family.

Functionally, might take part in the signal recognition particle (SRP) pathway. This is inferred from the conservation of its genetic proximity to ftsY/ffh. May be a regulatory protein. This Streptococcus pneumoniae (strain ATCC BAA-255 / R6) protein is UPF0122 protein spr1167.